The sequence spans 75 residues: Putative antitoxin VapB29 (75 aa).

Possibly the antitoxic component of a type II toxin-antitoxin (TA) system. Its cognate toxin is VapC29 (Potential). The chain is Putative antitoxin VapB29 (vapB29) from Mycobacterium tuberculosis (strain CDC 1551 / Oshkosh).